Consider the following 400-residue polypeptide: Pyruvate dehydrogenase E1 component subunit beta-4, chloroplastic (400 aa).

The interval M1–R34 is disordered. The N-terminal 57 residues, M1–R57, are a transit peptide targeting the chloroplast. Over residues A9 to R34 the composition is skewed to low complexity. E136 contacts thiamine diphosphate. Residues I189, A237, I238, and N242 each contribute to the K(+) site.

Tetramer of 2 alpha and 2 beta subunits. Thiamine diphosphate serves as cofactor.

Its subcellular location is the plastid. It localises to the chloroplast. The catalysed reaction is N(6)-[(R)-lipoyl]-L-lysyl-[protein] + pyruvate + H(+) = N(6)-[(R)-S(8)-acetyldihydrolipoyl]-L-lysyl-[protein] + CO2. The pyruvate dehydrogenase complex catalyzes the overall conversion of pyruvate to acetyl-CoA and CO(2). It contains multiple copies of three enzymatic components: pyruvate dehydrogenase (E1), dihydrolipoamide acetyltransferase (E2) and lipoamide dehydrogenase (E3). The chain is Pyruvate dehydrogenase E1 component subunit beta-4, chloroplastic from Oryza sativa subsp. japonica (Rice).